The following is a 111-amino-acid chain: UPF0145 protein Bphy_3680 (111 aa).

This sequence belongs to the UPF0145 family.

The sequence is that of UPF0145 protein Bphy_3680 from Paraburkholderia phymatum (strain DSM 17167 / CIP 108236 / LMG 21445 / STM815) (Burkholderia phymatum).